We begin with the raw amino-acid sequence, 445 residues long: Oxysterols receptor LXR-alpha (445 aa).

2 disordered regions span residues 1-34 (MSLW…QGGN) and 63-86 (ALLP…KKGP). Positions 1–94 (MSLWLEASMP…GPAPKMLGNE (94 aa)) are transactivation AF-1; required for ligand-independent transactivation function. The nuclear receptor DNA-binding region spans 93 to 168 (NELCSVCGDK…AGMREECVLS (76 aa)). 2 consecutive NR C4-type zinc fingers follow at residues 96 to 116 (CSVC…CEGC) and 132 to 156 (CHSG…LRKC). Serine 191 is subject to Phosphoserine. A transactivation AF-2; required for ligand-dependent transactivation function; mediates interaction with CCAR2 region spans residues 203–445 (QLSPEQLGMI…LLSEIWDVHE (243 aa)). An NR LBD domain is found at 207–445 (EQLGMIEKLV…LLSEIWDVHE (239 aa)).

It belongs to the nuclear hormone receptor family. NR1 subfamily. As to quaternary structure, heterodimer of NR1H3 and RXR (retinoic acid receptor). Interacts with CCAR2 (via N-terminus) in a ligand-independent manner. Interacts with SIRT1 and this interaction is inhibited by CCAR2. Post-translationally, ubiquitinated. Ubiquitination by UBR5 leads to its degradation: UBR5 specifically recognizes and binds ligand-bound NR1H3 when it is not associated with coactivators (NCOAs). In presence of NCOAs, the UBR5-degron is not accessible, preventing its ubiquitination and degradation.

It localises to the nucleus. Its subcellular location is the cytoplasm. Functionally, nuclear receptor that exhibits a ligand-dependent transcriptional activation activity. Interaction with retinoic acid receptor (RXR) shifts RXR from its role as a silent DNA-binding partner to an active ligand-binding subunit in mediating retinoid responses through target genes defined by LXRES. LXRES are DR4-type response elements characterized by direct repeats of two similar hexanuclotide half-sites spaced by four nucleotides. Plays an important role in the regulation of cholesterol homeostasis, regulating cholesterol uptake through MYLIP-dependent ubiquitination of LDLR, VLDLR and LRP8. Interplays functionally with RORA for the regulation of genes involved in liver metabolism. Induces LPCAT3-dependent phospholipid remodeling in endoplasmic reticulum (ER) membranes of hepatocytes, driving SREBF1 processing and lipogenesis. Via LPCAT3, triggers the incorporation of arachidonate into phosphatidylcholines of ER membranes, increasing membrane dynamics and enabling triacylglycerols transfer to nascent very low-density lipoprotein (VLDL) particles. Via LPCAT3 also counteracts lipid-induced ER stress response and inflammation, likely by modulating SRC kinase membrane compartmentalization and limiting the synthesis of lipid inflammatory mediators. The chain is Oxysterols receptor LXR-alpha (Nr1h3) from Mus musculus (Mouse).